A 22-amino-acid chain; its full sequence is Mu-conotoxin MIIIA (22 aa).

At glutamine 1 the chain carries Pyrrolidone carboxylic acid. Intrachain disulfides connect cysteine 3–cysteine 15, cysteine 4–cysteine 21, and cysteine 10–cysteine 22. Cysteine amide is present on cysteine 22.

Belongs to the conotoxin M superfamily. In terms of tissue distribution, expressed by the venom duct.

Its subcellular location is the secreted. Its function is as follows. Mu-conotoxins block voltage-gated sodium channels (Nav). This synthetic toxin potently blocks rNav1.3/SCN3A. It also moderately blocks rNav1.1/SCN1A, rNav1.2/SCN2A, rNav1.4/SCN4A, mNav1.6/SCN8A, and Nav1.7/SCN9A. sodium channels. This block is very slowly reversible. The polypeptide is Mu-conotoxin MIIIA (Conus magus (Magical cone)).